A 407-amino-acid polypeptide reads, in one-letter code: CCCH-type zinc finger protein oma-1 (407 aa).

The tract at residues 1 to 39 (MNVNGENNEKIDEHHLESSLAGVPTLPVSPLDHAKDLSQ) is disordered. The segment covering 7-17 (NNEKIDEHHLE) has biased composition (basic and acidic residues). Positions 46–80 (IGDLVTQTANLIAIKKQLLEDIAFNQHIQSMQVRA) are required for taf-4 binding. 2 C3H1-type zinc fingers span residues 112–140 (SYKTVICQAWLESKTCSFADNCRFAHGEE) and 154–182 (KYKTKLCDKYTTTGLCPYGKRCLFIHPDH). Thr239 carries the post-translational modification Phosphothreonine; by mbk-2 and GSK3. Position 302 is a phosphoserine; by mbk-2 (Ser302). At Thr339 the chain carries Phosphothreonine; by GSK3.

As to quaternary structure, interacts with taf-4 (via C-terminus). Interacts with ifet-1. Component of a ribonucleoprotein particle complex that interacts with cgh-1 and car-1 in an RNA-dependent manner. Association with many proteins is dependent on the presence of RNA. Post-translationally, phosphorylation by mbk-2 and by gsk-3 are required for its rapid degradation following meiosis II. As to expression, exclusively expressed in the hermaphrodite gonad. Expressed prior to oocyte division. Widely distributed throughout gonadal oocytes from the mitotic stage to the developing diakinesis stage. Expressed in sperm.

The protein localises to the cytoplasm. It localises to the cytoplasmic granule. It is found in the nucleus. Zinc-finger RNA-binding protein that binds to 5'-UA[AU]-3' motifs in the 3'-UTR of maternal mRNAs to suppress translation in oocytes and embryos. Acts as a ribonucleoprotein particle component that may exert part of its function within cytoplasmic foci of unfertilized oocytes. Acts redundantly with oma-2 to control the temporal expression and distribution of maternal proteins and thereby promote meiotic progression, oocyte maturation, fertilization and embryonic development. Recruits the translational repressor ifet-1 to the 3'-UTR of mei-1 and zif-1 to negatively regulate their translation. By suppressing the translation of the E3 ligase zif-1, may in turn play a role in the stabilization of zif-1 targets such as the maternal transcriptional repressor protein pie-1. Following fertilization, sequesters the transcription initiation factor, taf-4, in the cytoplasm, which prevents its nuclear localization and thus allows for transcriptional suppression in early embryos, but not in oocytes. Also, together with oma-2, is involved in P-granule distribution during embryonic development. This Caenorhabditis elegans protein is CCCH-type zinc finger protein oma-1.